A 147-amino-acid chain; its full sequence is Hemoglobin subunit beta (147 aa).

In terms of domain architecture, Globin spans 3 to 147; sequence LLSAEENAHV…VANALAHKYH (145 aa). The residue at position 13 (Thr-13) is a Phosphothreonine. A Phosphoserine modification is found at Ser-45. Lys-60 is subject to N6-acetyllysine. His-64 provides a ligand contact to heme b. Lys-83 carries the post-translational modification N6-acetyllysine. His-93 contacts heme b. The residue at position 94 (Cys-94) is an S-nitrosocysteine. Lys-145 is subject to N6-acetyllysine.

It belongs to the globin family. Heterotetramer of two alpha chains and two beta chains. Red blood cells.

Involved in oxygen transport from the lung to the various peripheral tissues. This Eulemur fulvus fulvus (Brown lemur) protein is Hemoglobin subunit beta (HBB).